We begin with the raw amino-acid sequence, 260 residues long: Dynein regulatory complex subunit 6 (260 aa).

Basic residues predominate over residues 1-13; the sequence is MAPKKKGGGKKKK. The segment at 1–43 is disordered; the sequence is MAPKKKGGGKKKKKDDGAEPPHDGSWERAVESGTWEKPVTDLP. Over residues 14-30 the composition is skewed to basic and acidic residues; sequence KDDGAEPPHDGSWERAV.

The protein belongs to the DRC6 family. As to quaternary structure, component of the nexin-dynein regulatory complex (N-DRC).

The protein resides in the cytoplasm. Its subcellular location is the cytoskeleton. It is found in the flagellum axoneme. Functionally, component of the nexin-dynein regulatory complex (N-DRC), a key regulator of ciliary/flagellar motility which maintains the alignment and integrity of the distal axoneme and regulates microtubule sliding in motile axonemes. The protein is Dynein regulatory complex subunit 6 of Chlamydomonas reinhardtii (Chlamydomonas smithii).